A 348-amino-acid polypeptide reads, in one-letter code: sn-glycerol-3-phosphate import ATP-binding protein UgpC 3 (348 aa).

One can recognise an ABC transporter domain in the interval 4–234; that stretch reads INIIDVKKNY…PASLFVASFI (231 aa). 36-43 is a binding site for ATP; it reads GPSGCGKS.

This sequence belongs to the ABC transporter superfamily. sn-glycerol-3-phosphate importer (TC 3.A.1.1.3) family. As to quaternary structure, the complex is composed of two ATP-binding proteins (UgpC), two transmembrane proteins (UgpA and UgpE) and a solute-binding protein (UgpB).

The protein resides in the cell inner membrane. It carries out the reaction sn-glycerol 3-phosphate(out) + ATP + H2O = sn-glycerol 3-phosphate(in) + ADP + phosphate + H(+). Part of the ABC transporter complex UgpBAEC involved in sn-glycerol-3-phosphate (G3P) import. Responsible for energy coupling to the transport system. In Rhizobium johnstonii (strain DSM 114642 / LMG 32736 / 3841) (Rhizobium leguminosarum bv. viciae), this protein is sn-glycerol-3-phosphate import ATP-binding protein UgpC 3.